A 514-amino-acid chain; its full sequence is 2-isopropylmalate synthase (514 aa).

The Pyruvate carboxyltransferase domain occupies Leu-5–Leu-267. Residues Asp-14, His-202, His-204, and Asn-238 each coordinate Mn(2+). The interval Arg-394–Val-514 is regulatory domain.

The protein belongs to the alpha-IPM synthase/homocitrate synthase family. LeuA type 1 subfamily. As to quaternary structure, homodimer. It depends on Mn(2+) as a cofactor.

It is found in the cytoplasm. The catalysed reaction is 3-methyl-2-oxobutanoate + acetyl-CoA + H2O = (2S)-2-isopropylmalate + CoA + H(+). Its pathway is amino-acid biosynthesis; L-leucine biosynthesis; L-leucine from 3-methyl-2-oxobutanoate: step 1/4. Catalyzes the condensation of the acetyl group of acetyl-CoA with 3-methyl-2-oxobutanoate (2-ketoisovalerate) to form 3-carboxy-3-hydroxy-4-methylpentanoate (2-isopropylmalate). This Hydrogenovibrio crunogenus (strain DSM 25203 / XCL-2) (Thiomicrospira crunogena) protein is 2-isopropylmalate synthase.